Here is a 158-residue protein sequence, read N- to C-terminus: MSTNGVMEKGFVTTSLDSVINWGRTGSMWPMTFGLACCAVEMMQAGASRYDLDRFGIVFRPSPRQSDVMIVAGTLCNKMAPALRKVYDQMAEPRWVISMGSCANGGGYYHYSYSVVRGCDRIVPVDIYVPGCPPTAEALLYGIIQLQNKIHRTNTIAR.

[4Fe-4S] cluster contacts are provided by cysteine 37, cysteine 38, cysteine 102, and cysteine 132.

The protein belongs to the complex I 20 kDa subunit family. As to quaternary structure, NDH-1 is composed of 14 different subunits. Subunits NuoB, C, D, E, F, and G constitute the peripheral sector of the complex. The cofactor is [4Fe-4S] cluster.

The protein resides in the cell inner membrane. It carries out the reaction a quinone + NADH + 5 H(+)(in) = a quinol + NAD(+) + 4 H(+)(out). Functionally, NDH-1 shuttles electrons from NADH, via FMN and iron-sulfur (Fe-S) centers, to quinones in the respiratory chain. Couples the redox reaction to proton translocation (for every two electrons transferred, four hydrogen ions are translocated across the cytoplasmic membrane), and thus conserves the redox energy in a proton gradient. The polypeptide is NADH-quinone oxidoreductase subunit B 2 (Nitrosospira multiformis (strain ATCC 25196 / NCIMB 11849 / C 71)).